The sequence spans 729 residues: Fatty acid oxidation complex subunit alpha (729 aa).

Positions 1-189 (MLYKGDTLYL…KIGLVDGVVK (189 aa)) are enoyl-CoA hydratase/isomerase. Position 296 (aspartate 296) interacts with substrate. The 3-hydroxyacyl-CoA dehydrogenase stretch occupies residues 311 to 729 (ETPKQAAVLG…ARPVGDLKTA (419 aa)). Residues methionine 324, aspartate 343, 400 to 402 (VVE), lysine 407, and serine 429 contribute to the NAD(+) site. Histidine 450 serves as the catalytic For 3-hydroxyacyl-CoA dehydrogenase activity. Asparagine 453 provides a ligand contact to NAD(+). Residues asparagine 500 and tyrosine 660 each contribute to the substrate site. Residues 708–729 (RHNEPYYPPVEPARPVGDLKTA) form a disordered region.

It in the N-terminal section; belongs to the enoyl-CoA hydratase/isomerase family. The protein in the C-terminal section; belongs to the 3-hydroxyacyl-CoA dehydrogenase family. In terms of assembly, heterotetramer of two alpha chains (FadB) and two beta chains (FadA).

The enzyme catalyses a (3S)-3-hydroxyacyl-CoA + NAD(+) = a 3-oxoacyl-CoA + NADH + H(+). It catalyses the reaction a (3S)-3-hydroxyacyl-CoA = a (2E)-enoyl-CoA + H2O. It carries out the reaction a 4-saturated-(3S)-3-hydroxyacyl-CoA = a (3E)-enoyl-CoA + H2O. The catalysed reaction is (3S)-3-hydroxybutanoyl-CoA = (3R)-3-hydroxybutanoyl-CoA. The enzyme catalyses a (3Z)-enoyl-CoA = a 4-saturated (2E)-enoyl-CoA. It catalyses the reaction a (3E)-enoyl-CoA = a 4-saturated (2E)-enoyl-CoA. It participates in lipid metabolism; fatty acid beta-oxidation. Involved in the aerobic and anaerobic degradation of long-chain fatty acids via beta-oxidation cycle. Catalyzes the formation of 3-oxoacyl-CoA from enoyl-CoA via L-3-hydroxyacyl-CoA. It can also use D-3-hydroxyacyl-CoA and cis-3-enoyl-CoA as substrate. This chain is Fatty acid oxidation complex subunit alpha, found in Shigella flexneri serotype 5b (strain 8401).